The following is a 616-amino-acid chain: Dihydroxy-acid dehydratase (616 aa).

Aspartate 81 lines the Mg(2+) pocket. Cysteine 122 is a [2Fe-2S] cluster binding site. Mg(2+) is bound by residues aspartate 123 and lysine 124. Residue lysine 124 is modified to N6-carboxylysine. Cysteine 195 contributes to the [2Fe-2S] cluster binding site. Residue glutamate 491 participates in Mg(2+) binding. Residue serine 517 is the Proton acceptor of the active site.

Belongs to the IlvD/Edd family. As to quaternary structure, homodimer. [2Fe-2S] cluster is required as a cofactor. The cofactor is Mg(2+).

It carries out the reaction (2R)-2,3-dihydroxy-3-methylbutanoate = 3-methyl-2-oxobutanoate + H2O. The catalysed reaction is (2R,3R)-2,3-dihydroxy-3-methylpentanoate = (S)-3-methyl-2-oxopentanoate + H2O. The protein operates within amino-acid biosynthesis; L-isoleucine biosynthesis; L-isoleucine from 2-oxobutanoate: step 3/4. It functions in the pathway amino-acid biosynthesis; L-valine biosynthesis; L-valine from pyruvate: step 3/4. Its function is as follows. Functions in the biosynthesis of branched-chain amino acids. Catalyzes the dehydration of (2R,3R)-2,3-dihydroxy-3-methylpentanoate (2,3-dihydroxy-3-methylvalerate) into 2-oxo-3-methylpentanoate (2-oxo-3-methylvalerate) and of (2R)-2,3-dihydroxy-3-methylbutanoate (2,3-dihydroxyisovalerate) into 2-oxo-3-methylbutanoate (2-oxoisovalerate), the penultimate precursor to L-isoleucine and L-valine, respectively. This is Dihydroxy-acid dehydratase from Salmonella dublin (strain CT_02021853).